The following is a 408-amino-acid chain: Tripartite motif containing 13 (408 aa).

The RING-type zinc finger occupies 10–58; the sequence is CPICCSLFDDPRVLPCSHNFCKKCLDGVLEENSRTMQWRPSSFKCPTCR. Residues 89–131 form a B box-type zinc finger; the sequence is PKMPVCKEHSDQPLNIFCSTDLKLICGSCATTGEHKKHVFSSI. Zn(2+)-binding residues include cysteine 94, histidine 97, cysteine 117, and histidine 123. A helical transmembrane segment spans residues 322-342; sequence ILVVACLILLLVTFLCAYPFI.

It is found in the endoplasmic reticulum membrane. Its pathway is protein modification; protein ubiquitination. Functionally, E3 ubiquitin ligase involved in the retrotranslocation and turnover of membrane and secretory proteins from the ER through a set of processes named ER-associated degradation (ERAD). This process acts on misfolded proteins as well as in the regulated degradation of correctly folded proteins. This is Tripartite motif containing 13 (trim13) from Xenopus tropicalis (Western clawed frog).